The chain runs to 244 residues: Ras-like protein family member 11B (244 aa).

Positions 19 to 242 (PSSRVIKIAV…VLSAKVRTVT (224 aa)) are small GTPase-like. Residues 30–37 (GGSGVGKT), 77–81 (DTPGV), and 142–145 (NKAD) each bind GTP. Residues 200-222 (INATSSVTEKKRSPLIPRPKSPN) are disordered.

The protein belongs to the small GTPase superfamily. Ras family.

The catalysed reaction is GTP + H2O = GDP + phosphate + H(+). In Danio rerio (Zebrafish), this protein is Ras-like protein family member 11B.